Reading from the N-terminus, the 205-residue chain is Proteasome subunit beta type-3 (205 aa).

Ser-2 bears the N-acetylserine mark. Lys-77 bears the N6-acetyllysine mark.

It belongs to the peptidase T1B family. As to quaternary structure, the 26S proteasome consists of a 20S proteasome core and two 19S regulatory subunits. The 20S proteasome core is a barrel-shaped complex made of 28 subunits that are arranged in four stacked rings. The two outer rings are each formed by seven alpha subunits, and the two inner rings are formed by seven beta subunits. The proteolytic activity is exerted by three beta-subunits PSMB5, PSMB6 and PSMB7.

It localises to the cytoplasm. The protein resides in the nucleus. Its function is as follows. Non-catalytic component of the 20S core proteasome complex involved in the proteolytic degradation of most intracellular proteins. This complex plays numerous essential roles within the cell by associating with different regulatory particles. Associated with two 19S regulatory particles, forms the 26S proteasome and thus participates in the ATP-dependent degradation of ubiquitinated proteins. The 26S proteasome plays a key role in the maintenance of protein homeostasis by removing misfolded or damaged proteins that could impair cellular functions, and by removing proteins whose functions are no longer required. Associated with the PA200 or PA28, the 20S proteasome mediates ubiquitin-independent protein degradation. This type of proteolysis is required in several pathways including spermatogenesis (20S-PA200 complex) or generation of a subset of MHC class I-presented antigenic peptides (20S-PA28 complex). The chain is Proteasome subunit beta type-3 (PSMB3) from Bos taurus (Bovine).